A 202-amino-acid polypeptide reads, in one-letter code: dTTP/UTP pyrophosphatase (202 aa).

The Proton acceptor role is filled by Asp74.

The protein belongs to the Maf family. YhdE subfamily. A divalent metal cation is required as a cofactor.

Its subcellular location is the cytoplasm. It carries out the reaction dTTP + H2O = dTMP + diphosphate + H(+). The enzyme catalyses UTP + H2O = UMP + diphosphate + H(+). In terms of biological role, nucleoside triphosphate pyrophosphatase that hydrolyzes dTTP and UTP. May have a dual role in cell division arrest and in preventing the incorporation of modified nucleotides into cellular nucleic acids. This chain is dTTP/UTP pyrophosphatase, found in Methylococcus capsulatus (strain ATCC 33009 / NCIMB 11132 / Bath).